We begin with the raw amino-acid sequence, 113 residues long: Holo-[acyl-carrier-protein] synthase (113 aa).

Residues D5 and E50 each contribute to the Mg(2+) site.

The protein belongs to the P-Pant transferase superfamily. AcpS family. Mg(2+) serves as cofactor.

It localises to the cytoplasm. The catalysed reaction is apo-[ACP] + CoA = holo-[ACP] + adenosine 3',5'-bisphosphate + H(+). Functionally, transfers the 4'-phosphopantetheine moiety from coenzyme A to a Ser of acyl-carrier-protein. The sequence is that of Holo-[acyl-carrier-protein] synthase from Nautilia profundicola (strain ATCC BAA-1463 / DSM 18972 / AmH).